The chain runs to 217 residues: Cytidylate kinase (217 aa).

10–18 (GPAGAGKST) contacts ATP.

It belongs to the cytidylate kinase family. Type 1 subfamily.

Its subcellular location is the cytoplasm. The catalysed reaction is CMP + ATP = CDP + ADP. The enzyme catalyses dCMP + ATP = dCDP + ADP. This Clostridium botulinum (strain Langeland / NCTC 10281 / Type F) protein is Cytidylate kinase.